The primary structure comprises 380 residues: Cytochrome b (380 aa).

4 helical membrane passes run 33–53, 77–98, 113–133, and 178–198; these read FGSLLGLCLISQILTGLFLAM, WLIRNLHANGASFFFICIYLHI, WNIGVVLLLLVMATAFVGYVL, and FFAFHFLLPFIVAAMTMLHLL. His83 and His97 together coordinate heme b. Heme b-binding residues include His182 and His196. Residue His201 coordinates a ubiquinone. Helical transmembrane passes span 226-246, 288-308, 320-340, and 347-367; these read YKDLLGFAAVIILLTCLALFT, LGGVLALLASILVLMVVPILH, VTQFLFWALIANVAILTWIGG, and YIIIGQIASLTYFALFLLIMP.

It belongs to the cytochrome b family. The cytochrome bc1 complex contains 3 respiratory subunits (MT-CYB, CYC1 and UQCRFS1), 2 core proteins (UQCRC1 and UQCRC2) and probably 6 low-molecular weight proteins. Heme b is required as a cofactor.

The protein localises to the mitochondrion inner membrane. Its function is as follows. Component of the ubiquinol-cytochrome c reductase complex (complex III or cytochrome b-c1 complex) that is part of the mitochondrial respiratory chain. The b-c1 complex mediates electron transfer from ubiquinol to cytochrome c. Contributes to the generation of a proton gradient across the mitochondrial membrane that is then used for ATP synthesis. This Pagrus major (Red sea bream) protein is Cytochrome b (mt-cyb).